Reading from the N-terminus, the 267-residue chain is MSYFEAFILALIQGLTEFLPISSSAHLILPSAILGWEDQGLAFDVAVHVGTLMAVVIYFRQEVITLFQALFASIFKGDRSKEAKLAWMIVIATIPACVFGLLMKDIIEVYLRSAYVIATTTIIFGLLLWWVDRNAELVADEYQTGWKKALFIGIAQALAMIPGTSRSGATITAALYLGFTREAAARFSFLMSIPIITLAGGYLGMKLVTSGEPVHIGFLLTGIVTSFISAYICIHFFLKMISRMGMTPFVIYRLILGFGLFAFLLMA.

Transmembrane regions (helical) follow at residues M1–I21, Q39–F59, A83–M103, L111–V131, T144–T164, F189–T209, F218–L238, and M246–M266.

This sequence belongs to the UppP family.

The protein localises to the cell inner membrane. The catalysed reaction is di-trans,octa-cis-undecaprenyl diphosphate + H2O = di-trans,octa-cis-undecaprenyl phosphate + phosphate + H(+). Catalyzes the dephosphorylation of undecaprenyl diphosphate (UPP). Confers resistance to bacitracin. This is Undecaprenyl-diphosphatase from Vibrio campbellii (strain ATCC BAA-1116).